We begin with the raw amino-acid sequence, 369 residues long: CLIP domain-containing serine protease HP8 (369 aa).

A signal peptide spans methionine 1–glycine 24. A propeptide spanning residues glutamine 25–alanine 81 is cleaved from the precursor. A Clip domain is found at lysine 26–cysteine 75. Cystine bridges form between cysteine 27/cysteine 74, cysteine 33/cysteine 63, cysteine 39/cysteine 75, cysteine 105/cysteine 239, cysteine 142/cysteine 158, cysteine 186/cysteine 191, cysteine 286/cysteine 303, and cysteine 313/cysteine 344. In terms of domain architecture, Peptidase S1 spans isoleucine 113 to glutamate 368. The active-site Charge relay system is the histidine 157. Ca(2+) is bound by residues glutamate 177, asparagine 179, threonine 182, and aspartate 185. The N-linked (GlcNAc...) asparagine glycan is linked to asparagine 179. Catalysis depends on aspartate 219, which acts as the Charge relay system. Catalysis depends on serine 317, which acts as the Charge relay system.

It belongs to the peptidase S1 family. CLIP subfamily. As to quaternary structure, in the active form, heterodimer of a light chain and a heavy chain; disulfide-linked. In terms of processing, proteolytically cleaved for activation. Cleavage produces a light chain and a catalytic heavy chain which remains covalently associated probably through an interchain disulfide bond. As to expression, in larvae, expressed in the fat body and hemocytes.

Its subcellular location is the secreted. The protein localises to the cytoplasm. Inhibited by (p-amidinophenyl) methanesulfonyl fluoride, p-nitrophenyl-p'-guanidinobenzoate, D-phenylalanyl-L-prolyl-L-arginyl chloromethane, leupeptin, antipain and to a lesser extent by antithrombin III. In terms of biological role, endopeptidase with selective post-Arg cleavage site. Functions in the innate immune response to fungal and Gram-positive bacterial infections. Upon pathogen infection promotes nodulation; a cellular defense response in which hemocytes surround and isolate invading pathogens forming aggregates called nodules. Involved in activating nodule formation in response to infection with M.luteus, E.coli or S.cerevisiae. Able to bind the microbes M.luteus, E.coli or S.cerevisiae. According to another report, does not bind microorganisms. This is CLIP domain-containing serine protease HP8 from Bombyx mori (Silk moth).